Here is a 56-residue protein sequence, read N- to C-terminus: Large ribosomal subunit protein bL33C (56 aa).

The protein belongs to the bacterial ribosomal protein bL33 family.

The protein is Large ribosomal subunit protein bL33C of Sorangium cellulosum (strain So ce56) (Polyangium cellulosum (strain So ce56)).